A 364-amino-acid polypeptide reads, in one-letter code: Protein L-Myc (364 aa).

Disordered regions lie at residues 41–81 (TSPP…HSKG), 111–172 (DRLA…EIDV), and 219–285 (PPES…KRKN). The segment covering 228 to 245 (ASERGPQEEVLERDAAGE) has biased composition (basic and acidic residues). The bHLH domain occupies 281-333 (TKRKNHNFLERKRRNDLRSRFLALRDQVPTLASCSKAPKVVILSKALEYLQAL). A leucine-zipper region spans residues 333 to 361 (LVGAEKRMATEKRQLRCRQQQLQKRIAYL).

Efficient DNA binding requires dimerization with another bHLH protein. Binds DNA as a heterodimer with MAX.

Its subcellular location is the nucleus. This is Protein L-Myc (MYCL) from Homo sapiens (Human).